A 288-amino-acid chain; its full sequence is MDVTAKYELIGLMAYPIRHSLSPKMQNKALEKAGLPFTYMAFEVDNDSFPGAIEGLKALKMRGTGISMPNKQLACEYVDELTPAAKLVGAINTIVNDDGYLRGYNTDGTGHIRAIKESGFDIKGKTMVLLGAGGASTAIGAQGAIEGLKEIKLFNRRDEFFDKALAFAQRVNENTDCVVTVTDLADQQAFAEALASADILTNGTKVGMKPLENESLVNDISLLHPGLLVTECVYNPHMTKLLQQAQQAGCKTIDGYGMLLWQGAEQFTLWTGKDFPLEYVKQVMGFGA.

Positions 71 and 107 each coordinate substrate. NAD(+) is bound by residues 132-135, 155-158, K205, 232-235, and G255; these read AGGA, NRRD, and CVYN.

Belongs to the shikimate dehydrogenase family. As to quaternary structure, homodimer.

The enzyme catalyses L-quinate + NAD(+) = 3-dehydroquinate + NADH + H(+). The catalysed reaction is L-quinate + NADP(+) = 3-dehydroquinate + NADPH + H(+). It carries out the reaction shikimate + NADP(+) = 3-dehydroshikimate + NADPH + H(+). It catalyses the reaction shikimate + NAD(+) = 3-dehydroshikimate + NADH + H(+). It participates in metabolic intermediate biosynthesis; chorismate biosynthesis; chorismate from D-erythrose 4-phosphate and phosphoenolpyruvate: step 4/7. In terms of biological role, the actual biological function of YdiB remains unclear, nor is it known whether 3-dehydroshikimate or quinate represents the natural substrate. Catalyzes the reversible NAD-dependent reduction of both 3-dehydroshikimate (DHSA) and 3-dehydroquinate to yield shikimate (SA) and quinate, respectively. It can use both NAD or NADP for catalysis, however it has higher catalytic efficiency with NAD. The protein is Quinate/shikimate dehydrogenase of Escherichia coli O139:H28 (strain E24377A / ETEC).